The primary structure comprises 256 residues: MLCIADKTFDSHLFTGTGKFASPQLMVSAIRESGSQLVTLAMKRVDLRNHNDAILAPLLEAGVTLLPNTSGAKTAEEAIFAAHLAREALGTSWLKLEIHPDARWLMPDPIETLKAAELLVKQGFTVLPYCGADPVLCKRLEEVGCAAVMPLGAPIGSNQGLETRAMLEIIIEQATIPVVVDAGIGVPSHAAQALEMGADAVLVNTAIAVADDPVMMARAFRLAVEAGALARQSGPGSRRAQAQASSPLTGFLEAYS.

Lys-95 (schiff-base intermediate with DXP) is an active-site residue. 1-deoxy-D-xylulose 5-phosphate-binding positions include Gly-156, 182 to 183 (AG), and 204 to 205 (NT).

This sequence belongs to the ThiG family. Homotetramer. Forms heterodimers with either ThiH or ThiS.

Its subcellular location is the cytoplasm. It carries out the reaction [ThiS sulfur-carrier protein]-C-terminal-Gly-aminoethanethioate + 2-iminoacetate + 1-deoxy-D-xylulose 5-phosphate = [ThiS sulfur-carrier protein]-C-terminal Gly-Gly + 2-[(2R,5Z)-2-carboxy-4-methylthiazol-5(2H)-ylidene]ethyl phosphate + 2 H2O + H(+). The protein operates within cofactor biosynthesis; thiamine diphosphate biosynthesis. Catalyzes the rearrangement of 1-deoxy-D-xylulose 5-phosphate (DXP) to produce the thiazole phosphate moiety of thiamine. Sulfur is provided by the thiocarboxylate moiety of the carrier protein ThiS. In vitro, sulfur can be provided by H(2)S. In Enterobacter sp. (strain 638), this protein is Thiazole synthase.